The sequence spans 832 residues: Protein translocase subunit SecA (832 aa).

Residues Q87, 105-109 (GEGKT), and D512 contribute to the ATP site.

This sequence belongs to the SecA family. Monomer and homodimer. Part of the essential Sec protein translocation apparatus which comprises SecA, SecYEG and auxiliary proteins SecDF-YajC and YidC.

It is found in the cell membrane. It localises to the cytoplasm. The enzyme catalyses ATP + H2O + cellular proteinSide 1 = ADP + phosphate + cellular proteinSide 2.. Functionally, part of the Sec protein translocase complex. Interacts with the SecYEG preprotein conducting channel. Has a central role in coupling the hydrolysis of ATP to the transfer of proteins into and across the cell membrane, serving as an ATP-driven molecular motor driving the stepwise translocation of polypeptide chains across the membrane. The protein is Protein translocase subunit SecA of Wigglesworthia glossinidia brevipalpis.